A 199-amino-acid chain; its full sequence is GTP cyclohydrolase 1 (199 aa).

Zn(2+) is bound by residues Cys89, His92, and Cys161.

Belongs to the GTP cyclohydrolase I family. Toroid-shaped homodecamer, composed of two pentamers of five dimers.

The enzyme catalyses GTP + H2O = 7,8-dihydroneopterin 3'-triphosphate + formate + H(+). Its pathway is cofactor biosynthesis; 7,8-dihydroneopterin triphosphate biosynthesis; 7,8-dihydroneopterin triphosphate from GTP: step 1/1. The sequence is that of GTP cyclohydrolase 1 from Bifidobacterium longum (strain NCC 2705).